The following is an 87-amino-acid chain: Small ribosomal subunit protein bS20 (87 aa).

The segment at 67 to 87 (HKNNGSRKASRLDAYVQSKQQ) is disordered.

The protein belongs to the bacterial ribosomal protein bS20 family.

Its function is as follows. Binds directly to 16S ribosomal RNA. The chain is Small ribosomal subunit protein bS20 from Metamycoplasma arthritidis (strain 158L3-1) (Mycoplasma arthritidis).